We begin with the raw amino-acid sequence, 381 residues long: Chorismate synthase (381 aa).

Arg-41 and Arg-47 together coordinate NADP(+). Residues 127 to 129 (RAS), 247 to 248 (QA), Gly-291, 306 to 310 (KPIPT), and Arg-332 each bind FMN.

The protein belongs to the chorismate synthase family. Homotetramer. Requires FMNH2 as cofactor.

The catalysed reaction is 5-O-(1-carboxyvinyl)-3-phosphoshikimate = chorismate + phosphate. Its pathway is metabolic intermediate biosynthesis; chorismate biosynthesis; chorismate from D-erythrose 4-phosphate and phosphoenolpyruvate: step 7/7. Catalyzes the anti-1,4-elimination of the C-3 phosphate and the C-6 proR hydrogen from 5-enolpyruvylshikimate-3-phosphate (EPSP) to yield chorismate, which is the branch point compound that serves as the starting substrate for the three terminal pathways of aromatic amino acid biosynthesis. This reaction introduces a second double bond into the aromatic ring system. This is Chorismate synthase from Anaeromyxobacter dehalogenans (strain 2CP-C).